The primary structure comprises 637 residues: Threonine--tRNA ligase (637 aa).

The region spanning 1 to 61 is the TGS domain; that stretch reads MLNITLPDCS…VEDSAVQIIT (61 aa). Residues 242–533 are catalytic; that stretch reads DHRKLGKQLD…LIENHAGSFP (292 aa). C333, H384, and H510 together coordinate Zn(2+).

This sequence belongs to the class-II aminoacyl-tRNA synthetase family. As to quaternary structure, homodimer. It depends on Zn(2+) as a cofactor.

The protein resides in the cytoplasm. It carries out the reaction tRNA(Thr) + L-threonine + ATP = L-threonyl-tRNA(Thr) + AMP + diphosphate + H(+). Functionally, catalyzes the attachment of threonine to tRNA(Thr) in a two-step reaction: L-threonine is first activated by ATP to form Thr-AMP and then transferred to the acceptor end of tRNA(Thr). Also edits incorrectly charged L-seryl-tRNA(Thr). The polypeptide is Threonine--tRNA ligase (Neisseria gonorrhoeae (strain ATCC 700825 / FA 1090)).